The chain runs to 26 residues: Acetyl-CoA acetyltransferase (26 aa).

C21 functions as the Acyl-thioester intermediate in the catalytic mechanism.

The protein belongs to the thiolase-like superfamily. Thiolase family. Homotetramer. Succinylation, adjacent to a coenzyme A binding site. Desuccinylated by SIRT5.

It localises to the mitochondrion. The enzyme catalyses 2 acetyl-CoA = acetoacetyl-CoA + CoA. This is Acetyl-CoA acetyltransferase from Sus scrofa (Pig).